The primary structure comprises 387 residues: Succinate--CoA ligase [ADP-forming] subunit beta (387 aa).

One can recognise an ATP-grasp domain in the interval 9 to 245 (KDLLESYGLK…KSQENAKELK (237 aa)). ATP is bound by residues Lys-46, 53–55 (GRG), Glu-100, Tyr-103, and Glu-108. Mg(2+)-binding residues include Asn-200 and Asp-214. Residues Asn-265 and 322-324 (GIV) each bind substrate.

The protein belongs to the succinate/malate CoA ligase beta subunit family. As to quaternary structure, heterotetramer of two alpha and two beta subunits. Requires Mg(2+) as cofactor.

The enzyme catalyses succinate + ATP + CoA = succinyl-CoA + ADP + phosphate. It carries out the reaction GTP + succinate + CoA = succinyl-CoA + GDP + phosphate. Its pathway is carbohydrate metabolism; tricarboxylic acid cycle; succinate from succinyl-CoA (ligase route): step 1/1. In terms of biological role, succinyl-CoA synthetase functions in the citric acid cycle (TCA), coupling the hydrolysis of succinyl-CoA to the synthesis of either ATP or GTP and thus represents the only step of substrate-level phosphorylation in the TCA. The beta subunit provides nucleotide specificity of the enzyme and binds the substrate succinate, while the binding sites for coenzyme A and phosphate are found in the alpha subunit. This Francisella tularensis subsp. holarctica (strain OSU18) protein is Succinate--CoA ligase [ADP-forming] subunit beta.